The chain runs to 61 residues: MDPNCSCSTGGSCTCSSSCGCKNCKCTSCKKSCCSCCPVGCSKCAQGCVCKGASDKCTCCA.

An N-acetylmethionine modification is found at methionine 1. Residues 1-29 are beta; sequence MDPNCSCSTGGSCTCSSSCGCKNCKCTSC. Residues cysteine 5, cysteine 7, cysteine 13, cysteine 15, cysteine 19, cysteine 21, cysteine 24, cysteine 26, cysteine 29, cysteine 33, cysteine 34, cysteine 36, cysteine 37, cysteine 41, cysteine 44, cysteine 48, cysteine 50, cysteine 57, cysteine 59, and cysteine 60 each contribute to the a divalent metal cation site. The segment at 30 to 61 is alpha; that stretch reads KKSCCSCCPVGCSKCAQGCVCKGASDKCTCCA.

Belongs to the metallothionein superfamily. Type 1 family.

Its function is as follows. Metallothioneins have a high content of cysteine residues that bind various heavy metals; these proteins are transcriptionally regulated by both heavy metals and glucocorticoids. The sequence is that of Metallothionein-1 (Mt1) from Rattus norvegicus (Rat).